We begin with the raw amino-acid sequence, 578 residues long: ATP-dependent RNA helicase has1 (578 aa).

Over residues 1 to 12 (MAKSELKRKKHQ) the composition is skewed to basic residues. A disordered region spans residues 1 to 81 (MAKSELKRKK…ERVQKSVNLN (81 aa)). 2 stretches are compositionally biased toward acidic residues: residues 36-53 (LPQDEDDYEQEEENEDAD) and 60-71 (SESEELDNENED). 2 positions are modified to phosphoserine: serine 60 and serine 62. Residues 89–117 (EKFSDLQLSENIQKAIKEMGFETMTEIQK) carry the Q motif motif. The region spanning 120 to 296 (IPPLLAGRDV…RISLKPGPLY (177 aa)) is the Helicase ATP-binding domain. 133 to 140 (AKTGSGKT) is an ATP binding site. Positions 243-246 (DEAD) match the DEAD box motif. The region spanning 310-480 (GLEQGYVVVD…NVQSQLEKLV (171 aa)) is the Helicase C-terminal domain. A Bipartite nuclear localization signal motif is present at residues 322–338 (KRFLLLFSFLKRNLKKK). Over residues 543 to 561 (DKKERRAGYNKKNHVDVYS) the composition is skewed to basic and acidic residues. Positions 543–578 (DKKERRAGYNKKNHVDVYSKQRSSAISQDKERGWSR) are disordered.

This sequence belongs to the DEAD box helicase family. DDX18/HAS1 subfamily. In terms of assembly, associates in the nucleolus with the 60S and pre-60S ribosomal subunits.

The protein resides in the nucleus. The protein localises to the nucleolus. It carries out the reaction ATP + H2O = ADP + phosphate + H(+). ATP-dependent RNA helicase involved in 40S ribosomal subunit biogenesis. Required for the processing and cleavage of 35S pre-rRNA at sites A0, A1, and A2, leading to mature 18S rRNA. The polypeptide is ATP-dependent RNA helicase has1 (has1) (Schizosaccharomyces pombe (strain 972 / ATCC 24843) (Fission yeast)).